The sequence spans 270 residues: Flavodoxin/ferredoxin--NADP reductase (270 aa).

The region spanning 12-113 is the FAD-binding FR-type domain; that stretch reads VLPDAQTVTS…PKPVGTLVID (102 aa). FAD-binding positions include 62-65, 78-80, and 86-88; these read RAYS, YSI, and PLT. Residue Thr126 participates in NADP(+) binding. Thr128 serves as a coordination point for FAD. NADP(+) is bound by residues Arg156, 192-193, Arg201, and Asp238; that span reads TR. Residue 264-270 participates in FAD binding; the sequence is AFVGEGI.

It belongs to the ferredoxin--NADP reductase type 1 family. In terms of assembly, monomer. FAD is required as a cofactor.

The protein localises to the cytoplasm. It catalyses the reaction 2 reduced [2Fe-2S]-[ferredoxin] + NADP(+) + H(+) = 2 oxidized [2Fe-2S]-[ferredoxin] + NADPH. The enzyme catalyses reduced [flavodoxin] + NADP(+) = oxidized [flavodoxin] + NADPH + 2 H(+). Transports electrons between flavodoxin or ferredoxin and NADPH. The sequence is that of Flavodoxin/ferredoxin--NADP reductase from Rhodobacter capsulatus (Rhodopseudomonas capsulata).